Consider the following 659-residue polypeptide: Pentatricopeptide repeat-containing protein At3g48810 (659 aa).

PPR repeat units lie at residues 75 to 109, 110 to 144, 145 to 179, 180 to 214, 215 to 243, 245 to 279, 280 to 314, 315 to 350, 351 to 385, 386 to 420, 421 to 455, 456 to 490, 492 to 526, 527 to 561, 562 to 598, and 599 to 633; these read TPLTFEVMIRKLAMDGQVDSVQYLLQQMKLQGFHC, SEDLFISVISVYRQVGLAERAVEMFYRIKEFGCDP, SVKIYNHVLDTLLGENRIQMIYMVYRDMKRDGFEP, NVFTYNVLLKALCKNNKVDGAKKLLVEMSNKGCCP, DAVSYTTVISSMCEVGLVKEGRELAERFE, VVSVYNALINGLCKEHDYKGAFELMREMVEKGISP, NVISYSTLINVLCNSGQIELAFSFLTQMLKRGCHP, NIYTLSSLVKGCFLRGTTFDALDLWNQMIRGFGLQP, NVVAYNTLVQGFCSHGNIVKAVSVFSHMEEIGCSP, NIRTYGSLINGFAKRGSLDGAVYIWNKMLTSGCCP, NVVVYTNMVEALCRHSKFKEAESLIEIMSKENCAP, SVPTFNAFIKGLCDAGRLDWAEKVFRQMEQQHRCP, NIVTYNELLDGLAKANRIEEAYGLTREIFMRGVEW, SSSTYNTLLHGSCNAGLPGIALQLVGKMMVDGKSP, DEITMNMIILAYCKQGKAERAAQMLDLVSCGRRKWRP, and DVISYTNVIWGLCRSNCREDGVILLERMISAGIVP.

Belongs to the PPR family. P subfamily.

The chain is Pentatricopeptide repeat-containing protein At3g48810 from Arabidopsis thaliana (Mouse-ear cress).